The primary structure comprises 502 residues: ATP synthase subunit alpha, chloroplastic (502 aa).

ATP is bound at residue 170-177 (GDRQTGKT).

It belongs to the ATPase alpha/beta chains family. As to quaternary structure, F-type ATPases have 2 components, CF(1) - the catalytic core - and CF(0) - the membrane proton channel. CF(1) has five subunits: alpha(3), beta(3), gamma(1), delta(1), epsilon(1). CF(0) has four main subunits: a, b, b' and c.

The protein resides in the plastid. Its subcellular location is the chloroplast thylakoid membrane. It carries out the reaction ATP + H2O + 4 H(+)(in) = ADP + phosphate + 5 H(+)(out). Its function is as follows. Produces ATP from ADP in the presence of a proton gradient across the membrane. The alpha chain is a regulatory subunit. In Tupiella akineta (Green alga), this protein is ATP synthase subunit alpha, chloroplastic.